The sequence spans 385 residues: Urotensin-2 receptor (385 aa).

Residues 1 to 53 (MALSLESTSFPMLAVSRSTASELPGGFNVSHNSSWTGPTDPSSLQDLVATGVI) are Extracellular-facing. Asn-28 and Asn-32 each carry an N-linked (GlcNAc...) asparagine glycan. The helical transmembrane segment at 54–76 (GAVLSTMGVVGVVGNVYTLVVMC) threads the bilayer. The Cytoplasmic segment spans residues 77–86 (RFLRASASMY). Residues 87 to 112 (VYVVNLALADLLYLLSIPFIVATYVT) form a helical membrane-spanning segment. At 113–123 (KDWHFGDVGCR) the chain is on the extracellular side. Cys-122 and Cys-198 form a disulfide bridge. A helical transmembrane segment spans residues 124 to 145 (VLFSLDFLTMHASIFTLTIMSS). At 146 to 166 (ERYAAVLRPLDTVQRSKGYRK) the chain is on the cytoplasmic side. The helical transmembrane segment at 167 to 185 (LLALGTWLLALLLTLPMML) threads the bilayer. Residues 186–208 (AIRLVRRGSKSLCLPAWGPRAHR) are Extracellular-facing. A helical transmembrane segment spans residues 209 to 231 (TYLTLLFGTSIVGPGLVIGLLYI). Residues 232-257 (RLARAYWLSQQASFKQTRRLPNPRVL) are Cytoplasmic-facing. Residues 258–283 (YLILGIVLLFWACFLPFWLWQLLAQY) traverse the membrane as a helical segment. The Extracellular portion of the chain corresponds to 284–298 (HQAMPLTPETARIIN). Residues 299 to 320 (YLTACLTYGNSCINPFLYTLLT) form a helical membrane-spanning segment. Residues 321-385 (KNYREYLRGR…SPVPPNGAFV (65 aa)) lie on the Cytoplasmic side of the membrane.

The protein belongs to the G-protein coupled receptor 1 family.

The protein resides in the cell membrane. High affinity receptor for urotensin-2 and urotensin-2B. The activity of this receptor is mediated by a G-protein that activate a phosphatidylinositol-calcium second messenger system. This Mus musculus (Mouse) protein is Urotensin-2 receptor (Uts2r).